The sequence spans 810 residues: Lon protease (810 aa).

The region spanning 32–226 is the Lon N-terminal domain; the sequence is LPAIAMRSNM…RILDILARET (195 aa). An ATP-binding site is contributed by 376–383; it reads GPPGVGKT. In terms of domain architecture, Lon proteolytic spans 612–791; it reads KPMIGVTTGL…EEVLEVALNE (180 aa). Residues Ser-697 and Lys-740 contribute to the active site.

The protein belongs to the peptidase S16 family. Homohexamer. Organized in a ring with a central cavity.

Its subcellular location is the cytoplasm. It catalyses the reaction Hydrolysis of proteins in presence of ATP.. Functionally, ATP-dependent serine protease that mediates the selective degradation of mutant and abnormal proteins as well as certain short-lived regulatory proteins. Required for cellular homeostasis and for survival from DNA damage and developmental changes induced by stress. Degrades polypeptides processively to yield small peptide fragments that are 5 to 10 amino acids long. Binds to DNA in a double-stranded, site-specific manner. This is Lon protease from Fervidobacterium nodosum (strain ATCC 35602 / DSM 5306 / Rt17-B1).